The primary structure comprises 439 residues: Tol-Pal system protein TolB (439 aa).

The signal sequence occupies residues 1 to 21 (MRFRLALSLLSLALFAAPAAA).

Belongs to the TolB family. The Tol-Pal system is composed of five core proteins: the inner membrane proteins TolA, TolQ and TolR, the periplasmic protein TolB and the outer membrane protein Pal. They form a network linking the inner and outer membranes and the peptidoglycan layer.

The protein localises to the periplasm. Its function is as follows. Part of the Tol-Pal system, which plays a role in outer membrane invagination during cell division and is important for maintaining outer membrane integrity. In Rhizorhabdus wittichii (strain DSM 6014 / CCUG 31198 / JCM 15750 / NBRC 105917 / EY 4224 / RW1) (Sphingomonas wittichii), this protein is Tol-Pal system protein TolB.